The sequence spans 109 residues: Cell division protein ZapA (109 aa).

Residues 21-99 (PDQRDALNQA…IEQALLEQGR (79 aa)) are a coiled coil.

This sequence belongs to the ZapA family. Type 1 subfamily. As to quaternary structure, homodimer. Interacts with FtsZ.

Its subcellular location is the cytoplasm. In terms of biological role, activator of cell division through the inhibition of FtsZ GTPase activity, therefore promoting FtsZ assembly into bundles of protofilaments necessary for the formation of the division Z ring. It is recruited early at mid-cell but it is not essential for cell division. The sequence is that of Cell division protein ZapA from Shigella boydii serotype 18 (strain CDC 3083-94 / BS512).